The chain runs to 587 residues: Mitogen-activated protein kinase 4 (587 aa).

In terms of domain architecture, Protein kinase spans 20 to 312 (FVDFQPLGFG…AEMGLQHPYM (293 aa)). Residues 26–34 (LGFGVNGLV) and lysine 49 contribute to the ATP site. Aspartate 149 serves as the catalytic Proton acceptor. Serine 186 is modified (phosphoserine; by PAK1, PAK2 and PAK3). The SEG motif motif lies at 186 to 188 (SEG). Positions 328–333 (FRIEDE) match the FRIEDE motif motif. Basic and acidic residues-rich tracts occupy residues 373-383 (QDASEVQRDPR) and 395-413 (VDPR…EQSH). The disordered stretch occupies residues 373 to 413 (QDASEVQRDPRAGSAPLAEDVQVDPRKDSHSSSERFLEQSH). Phosphoserine is present on serine 434. The disordered stretch occupies residues 499–534 (STQGGPEHASPPADDPERRLSASPPGRPAPVDGGAS).

The protein belongs to the protein kinase superfamily. CMGC Ser/Thr protein kinase family. MAP kinase subfamily. In terms of assembly, homodimer. Heterodimer with ERK3/MAPK6. Interacts with (via FRIEDE motif) MAPKAPK5. It depends on Mg(2+) as a cofactor. Post-translationally, phosphorylated at Ser-186 by PAK1, PAK2 and PAK3 resulting in catalytic activation. Phosphorylated by MAPKAPK5 at other sites. As to expression, high expression in heart and brain.

Its subcellular location is the cytoplasm. It is found in the nucleus. It carries out the reaction L-seryl-[protein] + ATP = O-phospho-L-seryl-[protein] + ADP + H(+). The catalysed reaction is L-threonyl-[protein] + ATP = O-phospho-L-threonyl-[protein] + ADP + H(+). With respect to regulation, activated by phosphorylation at Ser-186. Functionally, atypical MAPK protein. Phosphorylates microtubule-associated protein 2 (MAP2) and MAPKAPK5. The precise role of the complex formed with MAPKAPK5 is still unclear, but the complex follows a complex set of phosphorylation events: upon interaction with atypical MAPKAPK5, ERK4/MAPK4 is phosphorylated at Ser-186 and then mediates phosphorylation and activation of MAPKAPK5, which in turn phosphorylates ERK4/MAPK4. May promote entry in the cell cycle. The sequence is that of Mitogen-activated protein kinase 4 (MAPK4) from Homo sapiens (Human).